The sequence spans 344 residues: Follistatin (344 aa).

The N-terminal stretch at 1-29 (MVCARHQPGGLCLLLLLLCQFMEDRSAQA) is a signal peptide. One can recognise a TB domain in the interval 30 to 103 (GNCWLRQAKN…TCENVDCGPG (74 aa)). Intrachain disulfides connect C32–C55, C42–C88, C56–C91, C95–C106, C100–C116, C118–C150, C122–C143, C132–C164, C168–C179, C173–C189, C192–C225, C196–C218, C207–C239, C245–C256, C250–C267, C270–C302, C274–C295, and C284–C316. Positions 94–117 (TCENVDCGPGKKCRMNKKNKPRCV) constitute a Follistatin-like 1 domain. One can recognise a Kazal-like 1 domain in the interval 112–166 (NKPRCVCAPDCSNITWKGPVCGLDGKTYRNECALLKARCKEQPELEVQYQGKCKK). The N-linked (GlcNAc...) asparagine glycan is linked to N124. In terms of domain architecture, Follistatin-like 2 spans 167-190 (TCRDVFCPGSSTCVVDQTNNAYCV). The Kazal-like 2 domain occupies 186 to 241 (NAYCVTCNRICPEPSSSEQYLCGNDGVTYSSACHLRKATCLLGRSIGLAYEGKCIK). The Follistatin-like 3 domain maps to 244 to 268 (SCEDIQCGGGKKCLWDSKVGRGRCS). Residues 264–318 (RGRCSLCDELCPDSKSDEPVCASDNATYASECAMKEAACSSGVLLEVKHSGSCNS) form the Kazal-like 3 domain. An N-linked (GlcNAc...) asparagine glycan is attached at N288. A disordered region spans residues 315–344 (SCNSISEETEEEEEEEDQDYSFPISSILEW). The segment covering 321-333 (EETEEEEEEEDQD) has biased composition (acidic residues).

As to quaternary structure, interacts with GDF11. Interacts with activin A/INHBA. Interacts with myostatin/MSTN.

It is found in the secreted. Its subcellular location is the nucleus. The protein resides in the nucleolus. Multifunctional regulatory protein whose primary function is to antagonize members of the transforming growth factor beta (TGF-beta) superfamily including activin, myostatin, GDF11 or bone morphogenetic proteins (BMPs). Mechanistically, binds to these ligands in the extracellular space, blocking their type II receptor-binding site to inhibit downstream signaling. Plays an essential role in muscle fiber formation and growth both by preventing the repressive effects of myostatin and through SMAD3/AKT/mTOR signaling independently of myostatin. Also promotes neural differentiation by antagonizing the action BMP4. Acts as a specific inhibitor of the biosynthesis and secretion of pituitary follicle stimulating hormone (FSH) by sequestering activin A/INHBA. On the other hand, translocates into the nucleus where it down-regulates rRNA synthesis and ribosome biogenesis to maintain cellular energy homeostasis by binding to rDNA. This chain is Follistatin, found in Mus musculus (Mouse).